We begin with the raw amino-acid sequence, 530 residues long: Probable 1,4-beta-D-glucan cellobiohydrolase B (530 aa).

A signal peptide spans 1–26 (MLASTFSYRMYKTALILAALLGSGQA). Residues 27 to 461 (QQVGTSQAEV…SNIKVGPIGS (435 aa)) are catalytic. Residue Glu-238 is the Nucleophile of the active site. The Proton donor role is filled by Glu-243. N-linked (GlcNAc...) asparagine glycosylation occurs at Asn-296. The segment at 462–492 (TFNSGGSNPGGGTTTTAKPTTTTTTAGSPGG) is disordered. The tract at residues 462 to 494 (TFNSGGSNPGGGTTTTAKPTTTTTTAGSPGGTG) is ser/Thr-rich linker. Over residues 475-488 (TTTAKPTTTTTTAG) the composition is skewed to low complexity. One can recognise a CBM1 domain in the interval 494-530 (GVAQHYGQCGGNGWQGPTTCASPYTCQKLNDFYSQCL). 2 disulfide bridges follow: Cys-502-Cys-519 and Cys-513-Cys-529.

This sequence belongs to the glycosyl hydrolase 7 (cellulase C) family.

The protein localises to the secreted. It catalyses the reaction Hydrolysis of (1-&gt;4)-beta-D-glucosidic linkages in cellulose and cellotetraose, releasing cellobiose from the non-reducing ends of the chains.. Functionally, the biological conversion of cellulose to glucose generally requires three types of hydrolytic enzymes: (1) Endoglucanases which cut internal beta-1,4-glucosidic bonds; (2) Exocellobiohydrolases that cut the disaccharide cellobiose from the non-reducing end of the cellulose polymer chain; (3) Beta-1,4-glucosidases which hydrolyze the cellobiose and other short cello-oligosaccharides to glucose. In Neosartorya fischeri (strain ATCC 1020 / DSM 3700 / CBS 544.65 / FGSC A1164 / JCM 1740 / NRRL 181 / WB 181) (Aspergillus fischerianus), this protein is Probable 1,4-beta-D-glucan cellobiohydrolase B (cbhB).